We begin with the raw amino-acid sequence, 277 residues long: Thymidylate synthase (277 aa).

Position 21 (arginine 21) interacts with dUMP. Histidine 51 provides a ligand contact to (6R)-5,10-methylene-5,6,7,8-tetrahydrofolate. Residue 126-127 (RR) coordinates dUMP. Catalysis depends on cysteine 159, which acts as the Nucleophile. Residues 179 to 182 (RSAD), asparagine 190, and 220 to 222 (HLY) contribute to the dUMP site. Aspartate 182 is a binding site for (6R)-5,10-methylene-5,6,7,8-tetrahydrofolate. Serine 276 is a (6R)-5,10-methylene-5,6,7,8-tetrahydrofolate binding site.

Belongs to the thymidylate synthase family. Bacterial-type ThyA subfamily. In terms of assembly, homodimer.

It localises to the cytoplasm. The catalysed reaction is dUMP + (6R)-5,10-methylene-5,6,7,8-tetrahydrofolate = 7,8-dihydrofolate + dTMP. It participates in pyrimidine metabolism; dTTP biosynthesis. Its function is as follows. Catalyzes the reductive methylation of 2'-deoxyuridine-5'-monophosphate (dUMP) to 2'-deoxythymidine-5'-monophosphate (dTMP) while utilizing 5,10-methylenetetrahydrofolate (mTHF) as the methyl donor and reductant in the reaction, yielding dihydrofolate (DHF) as a by-product. This enzymatic reaction provides an intracellular de novo source of dTMP, an essential precursor for DNA biosynthesis. In Saccharophagus degradans (strain 2-40 / ATCC 43961 / DSM 17024), this protein is Thymidylate synthase.